The following is a 107-amino-acid chain: Replication restart protein PriB (107 aa).

In terms of domain architecture, SSB spans Met1–Ala97.

Belongs to the PriB family. Homodimer. Interacts with PriA and DnaT. Component of the replication restart primosome. Primosome assembly occurs via a 'hand-off' mechanism. PriA binds to replication forks, subsequently PriB then DnaT bind; DnaT then displaces ssDNA to generate the helicase loading substrate.

In terms of biological role, involved in the restart of stalled replication forks, which reloads the replicative helicase on sites other than the origin of replication; the PriA-PriB pathway is the major replication restart pathway. During primosome assembly it facilitates complex formation between PriA and DnaT on DNA; stabilizes PriA on DNA. Stimulates the DNA unwinding activity of PriA helicase. This is Replication restart protein PriB from Bordetella parapertussis (strain 12822 / ATCC BAA-587 / NCTC 13253).